The following is a 288-amino-acid chain: Elongation factor Ts (288 aa).

Residues 79 to 82 (TDFV) form an involved in Mg(2+) ion dislocation from EF-Tu region.

This sequence belongs to the EF-Ts family.

It localises to the cytoplasm. Associates with the EF-Tu.GDP complex and induces the exchange of GDP to GTP. It remains bound to the aminoacyl-tRNA.EF-Tu.GTP complex up to the GTP hydrolysis stage on the ribosome. This Ehrlichia ruminantium (strain Welgevonden) protein is Elongation factor Ts.